Consider the following 611-residue polypeptide: Phosphatidylinositol 3,4,5-trisphosphate 3-phosphatase and protein-tyrosine-phosphatase PTEN2A (611 aa).

Disordered regions lie at residues 1-42 (MSSE…GVAS) and 87-109 (GIRL…SSAT). Phosphoserine is present on Ser91. The span at 100–109 (TTTEGTSSAT) shows a compositional bias: low complexity. The region spanning 145–324 (RRYQEGGFDL…KYFERILTYF (180 aa)) is the Phosphatase tensin-type domain. The active-site Phosphocysteine intermediate is the Cys263. The C2 tensin-type domain occupies 331–458 (GRRCMLRGFR…FMVEVVLADI (128 aa)). Over residues 462-486 (IPTNPSSETASKTPEETSAANSSPV) the composition is skewed to polar residues. The interval 462 to 589 (IPTNPSSETA…VNASSSSESE (128 aa)) is disordered. The segment covering 495–507 (PDKETENPDKDDV) has biased composition (basic and acidic residues). Ser509 bears the Phosphoserine mark. 2 stretches are compositionally biased toward polar residues: residues 514–530 (DSTG…SQTP) and 549–565 (VSIS…QGVT).

This sequence belongs to the PTEN phosphatase protein family. As to expression, expressed in seedlings, roots, stems, leaves, flowers and siliques. However, at protein level, not observed in older leaves and mature siliques.

The enzyme catalyses O-phospho-L-tyrosyl-[protein] + H2O = L-tyrosyl-[protein] + phosphate. It catalyses the reaction a 1,2-diacyl-sn-glycero-3-phospho-(1D-myo-inositol-3,4,5-trisphosphate) + H2O = a 1,2-diacyl-sn-glycero-3-phospho-(1D-myo-inositol-4,5-bisphosphate) + phosphate. Functionally, binds phosphatidic acid. Protein tyrosine phosphatase that also exhibits lipid phosphatase activity. Hydrolyzed poorly p-nitrophenyl phosphate (p-NPP). Can use PtdIns isomers as substrates. Removes efficiently phosphate from the D3 position of the inositol ring, less from the D4 position and not at all from the D5 position on monophosphorylated PtdIns isomers (PIPs). The presence of a phosphate group in the D5 position on PIP(2) isomers reduces lipid phosphatase activity. Mostly active on PtdIns(3)P and PtdIns(3,4)P(2), to a lower extent, on PtdIns(4)P and PtdIns(3,5)P(2), but barely against PtdIns(3,4,5)P(3) as substrate. In Arabidopsis thaliana (Mouse-ear cress), this protein is Phosphatidylinositol 3,4,5-trisphosphate 3-phosphatase and protein-tyrosine-phosphatase PTEN2A.